The chain runs to 282 residues: Thiazole synthase (282 aa).

Residue Lys113 is the Schiff-base intermediate with DXP of the active site. Residues Gly174, Ala201 to Gly202, and Asn223 to Thr224 each bind 1-deoxy-D-xylulose 5-phosphate.

Belongs to the ThiG family. As to quaternary structure, homotetramer. Forms heterodimers with either ThiH or ThiS.

Its subcellular location is the cytoplasm. It catalyses the reaction [ThiS sulfur-carrier protein]-C-terminal-Gly-aminoethanethioate + 2-iminoacetate + 1-deoxy-D-xylulose 5-phosphate = [ThiS sulfur-carrier protein]-C-terminal Gly-Gly + 2-[(2R,5Z)-2-carboxy-4-methylthiazol-5(2H)-ylidene]ethyl phosphate + 2 H2O + H(+). Its pathway is cofactor biosynthesis; thiamine diphosphate biosynthesis. Functionally, catalyzes the rearrangement of 1-deoxy-D-xylulose 5-phosphate (DXP) to produce the thiazole phosphate moiety of thiamine. Sulfur is provided by the thiocarboxylate moiety of the carrier protein ThiS. In vitro, sulfur can be provided by H(2)S. This chain is Thiazole synthase, found in Cupriavidus metallidurans (strain ATCC 43123 / DSM 2839 / NBRC 102507 / CH34) (Ralstonia metallidurans).